The sequence spans 325 residues: Phage-like element PBSX protein XkdQ (325 aa).

To B.subtilis YqbQ.

This chain is Phage-like element PBSX protein XkdQ (xkdQ), found in Bacillus subtilis (strain 168).